A 396-amino-acid polypeptide reads, in one-letter code: Elongation factor Tu (396 aa).

In terms of domain architecture, tr-type G spans 10–206 (KPHVNVGTIG…ALDTYIPEPE (197 aa)). The interval 19–26 (GHVDHGKT) is G1. Residue 19 to 26 (GHVDHGKT) coordinates GTP. Thr26 serves as a coordination point for Mg(2+). The segment at 60 to 64 (GITIN) is G2. The tract at residues 81 to 84 (DCPG) is G3. GTP-binding positions include 81 to 85 (DCPGH) and 136 to 139 (NKAD). The interval 136 to 139 (NKAD) is G4. Residues 174-176 (SAL) are G5.

This sequence belongs to the TRAFAC class translation factor GTPase superfamily. Classic translation factor GTPase family. EF-Tu/EF-1A subfamily. As to quaternary structure, monomer.

The protein localises to the cytoplasm. The enzyme catalyses GTP + H2O = GDP + phosphate + H(+). GTP hydrolase that promotes the GTP-dependent binding of aminoacyl-tRNA to the A-site of ribosomes during protein biosynthesis. This chain is Elongation factor Tu, found in Thiobacillus denitrificans (strain ATCC 25259 / T1).